Reading from the N-terminus, the 82-residue chain is Consomatin Mao1 (82 aa).

An N-terminal signal peptide occupies residues 1-22 (MQTASWVMVMMMVWITAPLSEG). A propeptide spanning residues 23-57 (GKLNDVIRGLVPDDVTPQLILRSLFFHRPSDSVVR) is cleaved from the precursor. Cys-65 and Cys-70 are disulfide-bonded. Position 67 is a D-tryptophan (Trp-67). 3 positions are modified to 4-hydroxyproline: Pro-71, Pro-72, and Pro-74. A propeptide spanning residues 75 to 82 (WRRPNGKG) is cleaved from the precursor.

Belongs to the conotoxin C superfamily. Consomatin family. Expressed by the venom duct.

The protein localises to the secreted. In terms of biological role, moderately activates human somatostatin receptors (SSTR) with a preferential activation of SSTR1 and SSTR4. In vivo, does not cause behavioral changes in mice within a few minutes of intracranial injection, but causes a progressive loss of movement thereafter. Four to five hours after injection, mice recover, even with the highest dose tested. Shows antinociception and antihyperalgesia activities in two mouse models of acute pain, most probably by acting outside the central nervous system. This chain is Consomatin Mao1, found in Conus maioensis (Sea snail).